A 110-amino-acid chain; its full sequence is Large ribosomal subunit protein uL22 (110 aa).

It belongs to the universal ribosomal protein uL22 family. Part of the 50S ribosomal subunit.

Functionally, this protein binds specifically to 23S rRNA; its binding is stimulated by other ribosomal proteins, e.g. L4, L17, and L20. It is important during the early stages of 50S assembly. It makes multiple contacts with different domains of the 23S rRNA in the assembled 50S subunit and ribosome. In terms of biological role, the globular domain of the protein is located near the polypeptide exit tunnel on the outside of the subunit, while an extended beta-hairpin is found that lines the wall of the exit tunnel in the center of the 70S ribosome. This Vibrio parahaemolyticus serotype O3:K6 (strain RIMD 2210633) protein is Large ribosomal subunit protein uL22.